Here is a 98-residue protein sequence, read N- to C-terminus: MAAINRDDVAHLARLAHIEMSAEELDRMAGELAVIVESVKSVSEAAGDDVPATSHPIPLTNVFREDVVGHTFTAEQSLSGAPDAYEGRFKVPAILDED.

Belongs to the GatC family. In terms of assembly, heterotrimer of A, B and C subunits.

It carries out the reaction L-glutamyl-tRNA(Gln) + L-glutamine + ATP + H2O = L-glutaminyl-tRNA(Gln) + L-glutamate + ADP + phosphate + H(+). The catalysed reaction is L-aspartyl-tRNA(Asn) + L-glutamine + ATP + H2O = L-asparaginyl-tRNA(Asn) + L-glutamate + ADP + phosphate + 2 H(+). Functionally, allows the formation of correctly charged Asn-tRNA(Asn) or Gln-tRNA(Gln) through the transamidation of misacylated Asp-tRNA(Asn) or Glu-tRNA(Gln) in organisms which lack either or both of asparaginyl-tRNA or glutaminyl-tRNA synthetases. The reaction takes place in the presence of glutamine and ATP through an activated phospho-Asp-tRNA(Asn) or phospho-Glu-tRNA(Gln). The chain is Aspartyl/glutamyl-tRNA(Asn/Gln) amidotransferase subunit C from Arthrobacter sp. (strain FB24).